The primary structure comprises 203 residues: MSYVLPSLPYSYNALEPFFDEETMKIHHTKHHQNYINNTNSILENTTFSSLPIEELISILNEIILEKKNALRNNAGGHINHSFFWKSLKSGTVLTNDLKIEIEKQFGTIDEFKEKFESVALNHFGSGWVWLVNQNGVLSIVSTVNQDSPLMGKLISNTYGYPIIGLDIWEHAYYLKYQNRRLDYIKSFWNVVNWEEASNRLQK.

Mn(2+) contacts are provided by H27, H81, D167, and H171.

Belongs to the iron/manganese superoxide dismutase family. In terms of assembly, homodimer. Mn(2+) is required as a cofactor.

It carries out the reaction 2 superoxide + 2 H(+) = H2O2 + O2. Functionally, destroys superoxide anion radicals which are normally produced within the cells and which are toxic to biological systems. The sequence is that of Superoxide dismutase [Mn] (sodA) from Buchnera aphidicola subsp. Acyrthosiphon pisum (strain APS) (Acyrthosiphon pisum symbiotic bacterium).